Here is a 146-residue protein sequence, read N- to C-terminus: Transcription antitermination protein NusB (146 aa).

This sequence belongs to the NusB family.

Functionally, involved in transcription antitermination. Required for transcription of ribosomal RNA (rRNA) genes. Binds specifically to the boxA antiterminator sequence of the ribosomal RNA (rrn) operons. This is Transcription antitermination protein NusB from Solibacter usitatus (strain Ellin6076).